Consider the following 308-residue polypeptide: MVKAKWRSVDGIVLLNKPIGLSSNQALQRVRRLYQAAKAGHTGALDPLATGMLPLCLGEATKFSQYLLDADKRYLTCIQLGKRTTTGDREGEVLTEDSVPTLTDESLEEILNGFRGEIEQIPPMYSALKHEGKPLYEYARQGIVIERKRRRVTISNLTLVSRTEDTLTLDIQCSKGTYIRTIGEDIGEALGCGAHLHSLHRISTAGYLPENMMTLEEFEAIAEQGYDALDAHLITMDTAVEHFAKVELPESDTVNMMFGRTVPSPVSLEHEAVVRMYDQGTQRFLGLGQIKGAFIRPYRLVNTSEFSL.

Aspartate 46 (nucleophile) is an active-site residue.

The protein belongs to the pseudouridine synthase TruB family. Type 1 subfamily.

It catalyses the reaction uridine(55) in tRNA = pseudouridine(55) in tRNA. In terms of biological role, responsible for synthesis of pseudouridine from uracil-55 in the psi GC loop of transfer RNAs. The polypeptide is tRNA pseudouridine synthase B (Marinomonas sp. (strain MWYL1)).